A 161-amino-acid chain; its full sequence is MVSHKKNDRPRPLWILKIHKRLSLFEFKRYATGIGKDDGQDISWVLKGNAKNNVYQVTVETMENCETDECKKVIWVPDELAESTGTMFEDFKEDQPQESVSSISNNEANWGSSVNELDENYEKMQKEETFDPYDSDSDTSEDSDFDEDFEDSDKTMCSGQS.

The short motif at 72–75 (KVIW) is the PP1 binding motif element. Residues 85–161 (GTMFEDFKED…SDKTMCSGQS (77 aa)) are disordered. The span at 97-115 (QESVSSISNNEANWGSSVN) shows a compositional bias: polar residues. The segment covering 120-129 (NYEKMQKEET) has biased composition (basic and acidic residues). Residues 130–151 (FDPYDSDSDTSEDSDFDEDFED) are compositionally biased toward acidic residues.

As to quaternary structure, interacts with gsp-1 and gsp-2; the interaction is direct.

The protein resides in the chromosome. The protein localises to the nucleus. Involved in sister chromatid cohesion during mitosis and meiosis. In association with the gsp-2 phosphatase, it both restricts the localization and antagonizes the function of the air-2 kinase during meiosis I and mitosis to promote chromatid cohesion and spindle attachment. This in turn, drives germ cell immortality. Furthermore, may play a role in ensuring the timely assembly of the synaptonemal complex during prophase I of meiosis. This Caenorhabditis elegans protein is Long arms of the bivalent protein 1.